The chain runs to 414 residues: Gamma-glutamyl phosphate reductase (414 aa).

It belongs to the gamma-glutamyl phosphate reductase family.

The protein localises to the cytoplasm. It carries out the reaction L-glutamate 5-semialdehyde + phosphate + NADP(+) = L-glutamyl 5-phosphate + NADPH + H(+). It functions in the pathway amino-acid biosynthesis; L-proline biosynthesis; L-glutamate 5-semialdehyde from L-glutamate: step 2/2. In terms of biological role, catalyzes the NADPH-dependent reduction of L-glutamate 5-phosphate into L-glutamate 5-semialdehyde and phosphate. The product spontaneously undergoes cyclization to form 1-pyrroline-5-carboxylate. The protein is Gamma-glutamyl phosphate reductase of Clostridium botulinum (strain Eklund 17B / Type B).